Here is a 399-residue protein sequence, read N- to C-terminus: Argininosuccinate synthase (399 aa).

8-16 lines the ATP pocket; that stretch reads AYSGGLDTS. Y87 lines the L-citrulline pocket. Residue G117 coordinates ATP. L-aspartate contacts are provided by T119, N123, and D124. N123 is a binding site for L-citrulline. L-citrulline is bound by residues R127, S175, E260, and Y272.

This sequence belongs to the argininosuccinate synthase family. Type 1 subfamily. In terms of assembly, homotetramer.

It is found in the cytoplasm. The enzyme catalyses L-citrulline + L-aspartate + ATP = 2-(N(omega)-L-arginino)succinate + AMP + diphosphate + H(+). The protein operates within amino-acid biosynthesis; L-arginine biosynthesis; L-arginine from L-ornithine and carbamoyl phosphate: step 2/3. The chain is Argininosuccinate synthase from Rhodococcus jostii (strain RHA1).